The sequence spans 101 residues: uncharacterized protein (101 aa).

Its subcellular location is the mitochondrion. This is an uncharacterized protein from Arabidopsis thaliana (Mouse-ear cress).